The following is a 265-amino-acid chain: Indole-3-glycerol phosphate synthase (265 aa).

Belongs to the TrpC family.

It catalyses the reaction 1-(2-carboxyphenylamino)-1-deoxy-D-ribulose 5-phosphate + H(+) = (1S,2R)-1-C-(indol-3-yl)glycerol 3-phosphate + CO2 + H2O. The protein operates within amino-acid biosynthesis; L-tryptophan biosynthesis; L-tryptophan from chorismate: step 4/5. The sequence is that of Indole-3-glycerol phosphate synthase from Xanthomonas campestris pv. campestris (strain 8004).